The sequence spans 183 residues: Potassium-transporting ATPase KdpC subunit (183 aa).

The chain crosses the membrane as a helical span at residues 10–30 (ASLLVLSLVTGVAYPLLVTGI).

It belongs to the KdpC family. As to quaternary structure, the system is composed of three essential subunits: KdpA, KdpB and KdpC.

It localises to the cell inner membrane. Its function is as follows. Part of the high-affinity ATP-driven potassium transport (or Kdp) system, which catalyzes the hydrolysis of ATP coupled with the electrogenic transport of potassium into the cytoplasm. This subunit acts as a catalytic chaperone that increases the ATP-binding affinity of the ATP-hydrolyzing subunit KdpB by the formation of a transient KdpB/KdpC/ATP ternary complex. In Pseudomonas aeruginosa (strain UCBPP-PA14), this protein is Potassium-transporting ATPase KdpC subunit.